Reading from the N-terminus, the 427-residue chain is UPF0229 protein YeaH (427 aa).

The segment covering 79-90 (NDHFVQNDRIER) has biased composition (basic and acidic residues). A disordered region spans residues 79–110 (NDHFVQNDRIERPQGGGGGSGSGQGQASQDGE). The segment covering 92-102 (QGGGGGSGSGQ) has biased composition (gly residues).

It belongs to the UPF0229 family.

The polypeptide is UPF0229 protein YeaH (Escherichia coli (strain K12 / MC4100 / BW2952)).